A 547-amino-acid chain; its full sequence is Chaperonin GroEL 1 (547 aa).

ATP-binding positions include 30 to 33, Lys-51, 87 to 91, Gly-415, and Asp-496; these read TLGP and DGTTT.

This sequence belongs to the chaperonin (HSP60) family. In terms of assembly, forms a cylinder of 14 subunits composed of two heptameric rings stacked back-to-back. Interacts with the co-chaperonin GroES.

The protein localises to the cytoplasm. It carries out the reaction ATP + H2O + a folded polypeptide = ADP + phosphate + an unfolded polypeptide.. Its function is as follows. Together with its co-chaperonin GroES, plays an essential role in assisting protein folding. The GroEL-GroES system forms a nano-cage that allows encapsulation of the non-native substrate proteins and provides a physical environment optimized to promote and accelerate protein folding. In Rhodopseudomonas palustris (strain BisB5), this protein is Chaperonin GroEL 1.